Here is a 928-residue protein sequence, read N- to C-terminus: Eukaryotic translation initiation factor 3 subunit C (928 aa).

Disordered stretches follow at residues 1-37 (MSRFFANGSDSESESSEEEVPTQFNNKAQNFQFSDDE) and 157-286 (FREA…EDGE). Over residues 11–20 (SESESSEEEV) the composition is skewed to acidic residues. Polar residues predominate over residues 22–33 (TQFNNKAQNFQF). 4 positions are modified to phosphoserine: serine 34, serine 165, serine 177, and serine 186. Acidic residues predominate over residues 162 to 171 (DQESDVDEGE). Positions 172–184 (GDVHDSDADRAGD) are enriched in basic and acidic residues. A compositionally biased stretch (acidic residues) spans 215-240 (DDDDSEDSIDWDPDTESETESSEDEN). The segment covering 245–264 (MRERFLKRTTEKEDKDDDKR) has biased composition (basic and acidic residues). Residues 265-277 (KDKRKEQKHKVRK) show a composition bias toward basic residues. Residues 656–832 (FHMHINLELL…ETVVMHRSEP (177 aa)) form the PCI domain. The segment at 864 to 928 (FFQRGNMGNR…QQQVHTIDEE (65 aa)) is disordered. Positions 898–909 (QRNRNQRGHHKQ) are enriched in basic residues. Residues 910–921 (NQQQNQQQQQQQ) are compositionally biased toward low complexity.

This sequence belongs to the eIF-3 subunit C family. As to quaternary structure, component of the eukaryotic translation initiation factor 3 (eIF-3) complex. The eIF-3 complex interacts with pix.

It is found in the cytoplasm. Component of the eukaryotic translation initiation factor 3 (eIF-3) complex, which is involved in protein synthesis of a specialized repertoire of mRNAs and, together with other initiation factors, stimulates binding of mRNA and methionyl-tRNAi to the 40S ribosome. The eIF-3 complex specifically targets and initiates translation of a subset of mRNAs involved in cell proliferation. The chain is Eukaryotic translation initiation factor 3 subunit C from Drosophila grimshawi (Hawaiian fruit fly).